The sequence spans 491 residues: Ketol-acid reductoisomerase (NADP(+)) (491 aa).

Positions 15-208 (AQLGTCRFME…GGHRAGVLES (194 aa)) constitute a KARI N-terminal Rossmann domain. Residues 45–48 (CGAQ), R68, R76, S78, and 108–110 (DKQ) contribute to the NADP(+) site. H132 is a catalytic residue. G158 serves as a coordination point for NADP(+). KARI C-terminal knotted domains lie at 209 to 353 (SFVA…KEQE) and 354 to 486 (YFDK…MTAM). Positions 217, 221, 389, and 393 each coordinate Mg(2+). S414 provides a ligand contact to substrate.

The protein belongs to the ketol-acid reductoisomerase family. Requires Mg(2+) as cofactor.

The catalysed reaction is (2R)-2,3-dihydroxy-3-methylbutanoate + NADP(+) = (2S)-2-acetolactate + NADPH + H(+). It carries out the reaction (2R,3R)-2,3-dihydroxy-3-methylpentanoate + NADP(+) = (S)-2-ethyl-2-hydroxy-3-oxobutanoate + NADPH + H(+). It functions in the pathway amino-acid biosynthesis; L-isoleucine biosynthesis; L-isoleucine from 2-oxobutanoate: step 2/4. Its pathway is amino-acid biosynthesis; L-valine biosynthesis; L-valine from pyruvate: step 2/4. Involved in the biosynthesis of branched-chain amino acids (BCAA). Catalyzes an alkyl-migration followed by a ketol-acid reduction of (S)-2-acetolactate (S2AL) to yield (R)-2,3-dihydroxy-isovalerate. In the isomerase reaction, S2AL is rearranged via a Mg-dependent methyl migration to produce 3-hydroxy-3-methyl-2-ketobutyrate (HMKB). In the reductase reaction, this 2-ketoacid undergoes a metal-dependent reduction by NADPH to yield (R)-2,3-dihydroxy-isovalerate. In Christiangramia forsetii (strain DSM 17595 / CGMCC 1.15422 / KT0803) (Gramella forsetii), this protein is Ketol-acid reductoisomerase (NADP(+)).